The primary structure comprises 521 residues: Bifunctional purine biosynthesis protein PurH (521 aa).

The MGS-like domain occupies M1 to V147.

Belongs to the PurH family.

The catalysed reaction is (6R)-10-formyltetrahydrofolate + 5-amino-1-(5-phospho-beta-D-ribosyl)imidazole-4-carboxamide = 5-formamido-1-(5-phospho-D-ribosyl)imidazole-4-carboxamide + (6S)-5,6,7,8-tetrahydrofolate. The enzyme catalyses IMP + H2O = 5-formamido-1-(5-phospho-D-ribosyl)imidazole-4-carboxamide. It functions in the pathway purine metabolism; IMP biosynthesis via de novo pathway; 5-formamido-1-(5-phospho-D-ribosyl)imidazole-4-carboxamide from 5-amino-1-(5-phospho-D-ribosyl)imidazole-4-carboxamide (10-formyl THF route): step 1/1. Its pathway is purine metabolism; IMP biosynthesis via de novo pathway; IMP from 5-formamido-1-(5-phospho-D-ribosyl)imidazole-4-carboxamide: step 1/1. The sequence is that of Bifunctional purine biosynthesis protein PurH from Geotalea daltonii (strain DSM 22248 / JCM 15807 / FRC-32) (Geobacter daltonii).